Consider the following 61-residue polypeptide: Short neurotoxin 1 (61 aa).

4 cysteine pairs are disulfide-bonded: Cys3–Cys23, Cys17–Cys40, Cys42–Cys53, and Cys54–Cys59.

This sequence belongs to the three-finger toxin family. Short-chain subfamily. Type I alpha-neurotoxin sub-subfamily. As to expression, expressed by the venom gland.

Its subcellular location is the secreted. In terms of biological role, binds to muscle nicotinic acetylcholine receptor (nAChR) and inhibit acetylcholine from binding to the receptor, thereby impairing neuromuscular transmission. This is Short neurotoxin 1 from Naja samarensis (Peters' cobra).